The chain runs to 216 residues: Somatotropin (216 aa).

Residues 1–26 (MAAGPRNSVLLAFALLCLPWPQEVGT) form the signal peptide. His-45 provides a ligand contact to Zn(2+). Cys-78 and Cys-189 are disulfide-bonded. Residue Ser-131 is modified to Phosphoserine. Glu-198 provides a ligand contact to Zn(2+). Cysteines 206 and 214 form a disulfide.

This sequence belongs to the somatotropin/prolactin family.

It localises to the secreted. Plays an important role in growth control. Its major role in stimulating body growth is to stimulate the liver and other tissues to secrete IGF1. It stimulates both the differentiation and proliferation of myoblasts. It also stimulates amino acid uptake and protein synthesis in muscle and other tissues. This chain is Somatotropin (GH1), found in Felis catus (Cat).